The following is a 99-amino-acid chain: UPF0125 protein PM0166 (99 aa).

The protein belongs to the UPF0125 (RnfH) family.

The polypeptide is UPF0125 protein PM0166 (Pasteurella multocida (strain Pm70)).